A 1577-amino-acid polypeptide reads, in one-letter code: MILLHFVYSLWALLLIPLINAEEFTPKVTKTIAQDSFEILSFDDSNTLIRKQDASVTISFDDGETWEKVEGIEDEITWIYIDPFNRHDRAVATSMYESRLYITNDQGKSWERITLPDSEKNISSRGCYIETHPLNKNYFLAKCNYCEKTEVDNEENSGDEEGAPVIFNITRCTDKVFASNDGGKSFSEIKSSLERNENSAISISDCGFAKTGKDSDLESSDTSIICLFQNMQLIMDEFSSPYTESKLVLTTDWGKSLKEFDQFKDKVVNGYRILKSHMVVITQGDRYNDMSSMDVWVSNDLSNFKMAYMPTQLRHSMQGEIYEDAMGRIILPMSRERSDQEEDKGIVSEILISDSQGLKFSPIPWTANEVFGYINLYQPTYLKGTMIASLYPLSRRRNRKGKAKGVKNKGVTKISVDNGLTWTVLKVVDPDNADSFDCDITDFENCSLQNMFYTREGSTPTAGILMTTGIVGDGSVFDWGDQRTFISRDGGLTWKLAFDFPCLYAVGDYGNVIVAIPYNADEDDDPQSEFYYSLDQGKTWTEYQLETTIYPNEVMNTTPDGSGAKFILNGFTLAHMDGTTNFIYAIDFSTAFNDKTCEENDFEDWNLAEGKCVNGVKYKIRRRKQDAQCLVKKVFEDLQLFETACDKCTEADYECAFEFVRDATGKCVPDYNLIVLSDVCDKTKKKTVPVKPLQLVKGDKCKKPMTVKSVDISCEGVPKKGTNDKEIVVTENKFDFKIQFYQYFDTVTDESLLMINSRGEAYISHDGGQTIRRFDSNGETIIEVVFNPYYNSSAYLFGSKGSIFSTHDRGYSFMTAKLPEARQLGMPLDFNAKAQDTFIYYGGKNCESILSPECHAVAYLTNDGGETFTEMLDNAIHCEFAGSLFKYPSNEDMVMCQVKEKSSQTRSLVSSTDFFQDDKNTVFENIIGYLSTGGYIIVAVPHENNELRAYVTIDGTEFAEAKFPYDEDVGKQEAFTILESEKGSIFLHLATNLVPGRDFGNLLKSNSNGTSFVTLEHAVNRNTFGYVDFEKIQGLEGIILTNIVSNSDKVAENKEDKQLKTKITFNEGSDWNFLKPPKRDSEGKKFSCSSKSLDECSLHLHGYTERKDIRDTYSSGSALGMMFGVGNVGPNLLPYKECSTFFTTDGGETWAEVKKTPHQWEYGDHGGILVLVPENSETDSISYSTDFGKTWKDYKFCADKVLVKDITTVPRDSALRFLLFGEAADIGGSSFRTYTIDFRNIFERQCDFDITGKESADYKYSPLSSKSNCLFGHQTEFLRKTDENCFIGNIPLSEFSRNIKNCSCTRQDFECDYNFYKANDGTCKLVKGLSPANAADVCKKEPDLIEYFESSGYRKIPLSTCEGGLKLDAPSSPHACPGKEKEFKEKYSVSAGPFAFIFISILLIIFFAAWFVYDRGIRRNGGFARFGEIRLGDDGLIENNNTDRVVNNIVKSGFYVFSNIGSLLQHTKTNIAHVISKIRGRFGNRTGPSYSSLIHDQFLDEADDLLAGHDEDANDLSSFMDQGSNFEIEEDDVPTLEEEHTSYTDQPTTTDVPDALPEGNEENIDRPDSTAPSNENQ.

A signal peptide spans 1 to 21 (MILLHFVYSLWALLLIPLINA). Residues 22 to 1391 (EEFTPKVTKT…EFKEKYSVSA (1370 aa)) lie on the Lumenal side of the membrane. 2 BNR repeats span residues 58-68 (ISFDDGETWEK) and 101-111 (YITNDQGKSWE). 2 N-linked (GlcNAc...) asparagine glycosylation sites follow: N121 and N168. 2 BNR repeats span residues 179–187 (SNDGGKSFS) and 414–423 (ISVDNGLTWT). An N-linked (GlcNAc...) asparagine glycan is attached at N445. 3 BNR repeats span residues 485–495 (FISRDGGLTWK), 531–541 (YYSLDQGKTWT), and 762–771 (YISHDGGQTI). Residue N791 is glycosylated (N-linked (GlcNAc...) asparagine). One copy of the BNR 8 repeat lies at 859 to 869 (YLTNDGGETFT). N-linked (GlcNAc...) asparagine glycosylation occurs at N1008. BNR repeat units follow at residues 1141 to 1150 (FFTTDGGETW) and 1183 to 1192 (YSTDFGKTWK). N1301 carries N-linked (GlcNAc...) asparagine glycosylation. A helical membrane pass occupies residues 1392 to 1412 (GPFAFIFISILLIIFFAAWFV). Residues 1413-1577 (YDRGIRRNGG…DSTAPSNENQ (165 aa)) lie on the Cytoplasmic side of the membrane. Residues 1531–1577 (DDVPTLEEEHTSYTDQPTTTDVPDALPEGNEENIDRPDSTAPSNENQ) form a disordered region.

The protein belongs to the VPS10-related sortilin family.

It is found in the golgi apparatus. The protein localises to the trans-Golgi network membrane. It localises to the prevacuolar compartment membrane. In terms of biological role, functions as a sorting receptor in the Golgi compartment required for the intracellular sorting and delivery of soluble vacuolar proteins, like carboxypeptidase Y (CPY) and proteinase A. Executes multiple rounds of sorting by cycling between the late Golgi and a prevacuolar endosome-like compartment. Binds the Golgi-modified P2 form of CPY, and this interaction is dependent on the presence of an intact CPY vacuolar protein sorting signal. The polypeptide is Vacuolar protein sorting/targeting protein PEP1 (PEP1) (Saccharomyces cerevisiae (strain RM11-1a) (Baker's yeast)).